A 943-amino-acid polypeptide reads, in one-letter code: Nuclear receptor coactivator 7 (943 aa).

Position 1 is an N-acetylmethionine (Met-1). The span at 1–15 (MDTKEEKKEQKERKQ) shows a compositional bias: basic and acidic residues. Residues 1–32 (MDTKEEKKEQKERKQSYFARLKKKKQAKQNAE) adopt a coiled-coil conformation. The disordered stretch occupies residues 1-83 (MDTKEEKKEQ…RKSNQLKEIR (83 aa)). A Phosphoserine modification is found at Ser-92. The LysM domain occupies 117–160 (MEYTAGSQDTLNSVALKFNVTPNKLVELNKLFTHTIVPGQVLFV). A Phosphothreonine modification is found at Thr-137. Residues 169 to 189 (TIQLSSSTPGATVSPSSSDAE) form a disordered region. The segment covering 177–187 (PGATVSPSSSD) has biased composition (polar residues). Residues Ser-182, Ser-186, Ser-211, Ser-212, and Ser-214 each carry the phosphoserine modification. The segment at 334–369 (EKRQQNGERTLALDAKSVRSPEESTERTCTRIEPPD) is disordered. Basic and acidic residues predominate over residues 349 to 369 (KSVRSPEESTERTCTRIEPPD). Ser-442, Ser-498, and Ser-500 each carry phosphoserine. The segment covering 486–499 (EKQDEAPEVDKHSG) has biased composition (basic and acidic residues). Disordered regions lie at residues 486-507 (EKQDEAPEVDKHSGSPENLGES) and 543-576 (LSDRKSIEPGGIDITLSSSLPQAGDSPPEDNKEP). The 162-residue stretch at 782–943 (ALLENMHIEQ…VQDLEVWTFE (162 aa)) folds into the TLDc domain.

The protein belongs to the OXR1 family. In terms of assembly, interacts with ESR1, ESR2A, ESR2B, THRB, PPARG and RARA in a ligand-inducible manner. Interacts with the heterodimer AHR-ARNT. Highly expressed in brain and kidney. Weakly expressed in mammary gland, lung and testis. In brain, expression is found in neurons of cerebral cortex, thalamus, hypothalamus, hippocampus, cerebellum, striatum and choroid plexus.

It is found in the nucleus. Its function is as follows. Enhances the transcriptional activities of several nuclear receptors. Involved in the coactivation of different nuclear receptors, such as ESR1, THRB, PPARG and RARA. This chain is Nuclear receptor coactivator 7 (Ncoa7), found in Mus musculus (Mouse).